The chain runs to 470 residues: Glutamate--tRNA ligase (470 aa).

A 'HIGH' region motif is present at residues Pro15–Gly25. The 'KMSKS' region motif lies at Lys240–Arg244. Lys243 is a binding site for ATP.

Belongs to the class-I aminoacyl-tRNA synthetase family. Glutamate--tRNA ligase type 1 subfamily. Monomer.

The protein resides in the cytoplasm. It catalyses the reaction tRNA(Glu) + L-glutamate + ATP = L-glutamyl-tRNA(Glu) + AMP + diphosphate. Catalyzes the attachment of glutamate to tRNA(Glu) in a two-step reaction: glutamate is first activated by ATP to form Glu-AMP and then transferred to the acceptor end of tRNA(Glu). The protein is Glutamate--tRNA ligase of Caulobacter vibrioides (strain ATCC 19089 / CIP 103742 / CB 15) (Caulobacter crescentus).